Consider the following 411-residue polypeptide: D-galactonate dehydratase family member SBI_01856 (411 aa).

Residues N45 and H130 each contribute to the substrate site. Y167 functions as the Proton donor/acceptor in the catalytic mechanism. Residue D219 participates in Mg(2+) binding. The Proton donor/acceptor role is filled by H221. Mg(2+) contacts are provided by E245 and E271. Residues E271, R292, H321, D325, and E348 each coordinate substrate.

The protein belongs to the mandelate racemase/muconate lactonizing enzyme family. GalD subfamily. Mg(2+) serves as cofactor.

The enzyme catalyses D-gluconate = 2-dehydro-3-deoxy-D-gluconate + H2O. In terms of biological role, has low D-gluconate dehydratase activity (in vitro), suggesting that it has no significant role in D-gluconate degradation in vivo. Has no detectable activity with a panel of 70 other acid sugars (in vitro). The protein is D-galactonate dehydratase family member SBI_01856 of Streptomyces bingchenggensis (strain BCW-1).